Here is a 254-residue protein sequence, read N- to C-terminus: 4-hydroxy-tetrahydrodipicolinate reductase (254 aa).

7 to 12 (GASGRI) contacts NAD(+). NADP(+) is bound at residue Arg-35. NAD(+) contacts are provided by residues 91–93 (GTT) and 115–118 (AHNM). His-147 functions as the Proton donor/acceptor in the catalytic mechanism. Residue His-148 coordinates (S)-2,3,4,5-tetrahydrodipicolinate. Lys-151 serves as the catalytic Proton donor. 157–158 (GT) contributes to the (S)-2,3,4,5-tetrahydrodipicolinate binding site.

The protein belongs to the DapB family.

The protein localises to the cytoplasm. The catalysed reaction is (S)-2,3,4,5-tetrahydrodipicolinate + NAD(+) + H2O = (2S,4S)-4-hydroxy-2,3,4,5-tetrahydrodipicolinate + NADH + H(+). The enzyme catalyses (S)-2,3,4,5-tetrahydrodipicolinate + NADP(+) + H2O = (2S,4S)-4-hydroxy-2,3,4,5-tetrahydrodipicolinate + NADPH + H(+). It functions in the pathway amino-acid biosynthesis; L-lysine biosynthesis via DAP pathway; (S)-tetrahydrodipicolinate from L-aspartate: step 4/4. In terms of biological role, catalyzes the conversion of 4-hydroxy-tetrahydrodipicolinate (HTPA) to tetrahydrodipicolinate. In Helicobacter pylori (strain G27), this protein is 4-hydroxy-tetrahydrodipicolinate reductase.